Consider the following 52-residue polypeptide: uncharacterized protein (52 aa).

This is an uncharacterized protein from Thermoproteus tenax (TTV1).